The chain runs to 315 residues: Methionyl-tRNA formyltransferase (315 aa).

An N-terminal domain region spans residues 2-189 (SESLRIIFAG…LITTLKQLAD (188 aa)). 113 to 116 (SLLP) contributes to the (6S)-5,6,7,8-tetrahydrofolate binding site. A C-terminal domain region spans residues 210-315 (KEEARIDWSL…EWFVPGNRLV (106 aa)).

The protein belongs to the Fmt family.

The enzyme catalyses L-methionyl-tRNA(fMet) + (6R)-10-formyltetrahydrofolate = N-formyl-L-methionyl-tRNA(fMet) + (6S)-5,6,7,8-tetrahydrofolate + H(+). Its function is as follows. Attaches a formyl group to the free amino group of methionyl-tRNA(fMet). The formyl group appears to play a dual role in the initiator identity of N-formylmethionyl-tRNA by promoting its recognition by IF2 and preventing the misappropriation of this tRNA by the elongation apparatus. This is Methionyl-tRNA formyltransferase from Escherichia coli O157:H7.